Here is a 404-residue protein sequence, read N- to C-terminus: Probable eukaryotic initiation factor 4A (404 aa).

The tract at residues 1-28 is disordered; that stretch reads MAQQGKVEPQDQDSFLDDQPGIRPIPSF. Residues 26 to 54 carry the Q motif motif; the sequence is PSFDDMPLHQNLLRGIYSHGFEKPSSIQQ. One can recognise a Helicase ATP-binding domain in the interval 57-231; the sequence is IVPFTRGGDI…KKFMRDPTRI (175 aa). 70–77 contributes to the ATP binding site; sequence AQSGTGKT. The DEAD box signature appears at 179–182; the sequence is DEAD. One can recognise a Helicase C-terminal domain in the interval 242 to 402; that stretch reads GIKQYFIAVE…ELPVDFAAYL (161 aa).

This sequence belongs to the DEAD box helicase family. eIF4A subfamily. As to quaternary structure, eIF4F is a multi-subunit complex, the composition of which varies with external and internal environmental conditions. It is composed of at least EIF4A, EIF4E and EIF4G.

It carries out the reaction ATP + H2O = ADP + phosphate + H(+). Its function is as follows. ATP-dependent RNA helicase which is a subunit of the eIF4F complex involved in cap recognition and is required for mRNA binding to ribosome. In the current model of translation initiation, eIF4A unwinds RNA secondary structures in the 5'-UTR of mRNAs which is necessary to allow efficient binding of the small ribosomal subunit, and subsequent scanning for the initiator codon. In Trypanosoma cruzi (strain CL Brener), this protein is Probable eukaryotic initiation factor 4A.